Here is a 68-residue protein sequence, read N- to C-terminus: C-hordein (68 aa).

2 stretches are compositionally biased toward pro residues: residues 1-24 and 33-55; these read YPQQ…PQQP and PQQP…PLQP. Residues 1–68 form a disordered region; the sequence is YPQQPQPFPQ…YTQQTIWSMV (68 aa). The span at 59 to 68 shows a compositional bias: polar residues; the sequence is YTQQTIWSMV.

Developing endosperm.

Its function is as follows. Sulfur-poor seed storage protein. The polypeptide is C-hordein (Hordeum vulgare (Barley)).